The primary structure comprises 265 residues: Undecaprenyl-diphosphatase (265 aa).

8 helical membrane passes run 19-39 (FLPV…GFTG), 42-62 (ADSF…CLYW), 80-100 (IRGL…GLVA), 108-128 (LFNP…IFLV), 143-163 (MTPG…WPGF), 181-201 (SLAA…ATLY), 220-240 (IGFV…IVLV), and 243-263 (ITLR…FFFW).

It belongs to the UppP family.

It localises to the cell inner membrane. It catalyses the reaction di-trans,octa-cis-undecaprenyl diphosphate + H2O = di-trans,octa-cis-undecaprenyl phosphate + phosphate + H(+). Its function is as follows. Catalyzes the dephosphorylation of undecaprenyl diphosphate (UPP). Confers resistance to bacitracin. The polypeptide is Undecaprenyl-diphosphatase (Solidesulfovibrio magneticus (strain ATCC 700980 / DSM 13731 / RS-1) (Desulfovibrio magneticus)).